A 126-amino-acid chain; its full sequence is Phosphoribosyl-ATP pyrophosphatase (126 aa).

The protein belongs to the PRA-PH family.

Its subcellular location is the cytoplasm. It carries out the reaction 1-(5-phospho-beta-D-ribosyl)-ATP + H2O = 1-(5-phospho-beta-D-ribosyl)-5'-AMP + diphosphate + H(+). Its pathway is amino-acid biosynthesis; L-histidine biosynthesis; L-histidine from 5-phospho-alpha-D-ribose 1-diphosphate: step 2/9. This chain is Phosphoribosyl-ATP pyrophosphatase, found in Variovorax paradoxus (strain S110).